Consider the following 447-residue polypeptide: Voltage-gated purine nucleotide uniporter SLC17A9 (447 aa).

A disordered region spans residues M1 to D26. 11 helical membrane passes run I40 to V60, G74 to L94, V103 to H123, L129 to A149, T169 to L189, C192 to V212, V252 to W272, W287 to I307, V327 to L347, G380 to L400, and C413 to G433.

This sequence belongs to the major facilitator superfamily. Sodium/anion cotransporter family. In brain, specifically expressed in the medulla and is associated with chromaffin granules (at protein level). Predominantly expressed in adrenal gland, brain and thyroid.

It is found in the cytoplasmic vesicle. Its subcellular location is the secretory vesicle. The protein localises to the chromaffin granule membrane. The protein resides in the secretory vesicle membrane. It localises to the lysosome membrane. It catalyses the reaction ATP(in) = ATP(out). The catalysed reaction is ADP(in) = ADP(out). The enzyme catalyses GTP(in) = GTP(out). With respect to regulation, activity is chloride-dependent. Functionally, voltage-gated ATP nucleotide uniporter that can also transport the purine nucleotides ADP and GTP. Uses the membrane potential as the driving force to control ATP accumulation in lysosomes and secretory vesicles. By controlling ATP storage in lysosomes, regulates ATP-dependent proteins of these organelles. Also indirectly regulates the exocytosis of ATP through its import into lysosomes in astrocytes and secretory vesicles such as adrenal chromaffin granules, mucin granules and synaptic vesicles. This is Voltage-gated purine nucleotide uniporter SLC17A9 from Mus musculus (Mouse).